The primary structure comprises 426 residues: Gamma-glutamyl phosphate reductase (426 aa).

Belongs to the gamma-glutamyl phosphate reductase family.

Its subcellular location is the cytoplasm. It catalyses the reaction L-glutamate 5-semialdehyde + phosphate + NADP(+) = L-glutamyl 5-phosphate + NADPH + H(+). The protein operates within amino-acid biosynthesis; L-proline biosynthesis; L-glutamate 5-semialdehyde from L-glutamate: step 2/2. Catalyzes the NADPH-dependent reduction of L-glutamate 5-phosphate into L-glutamate 5-semialdehyde and phosphate. The product spontaneously undergoes cyclization to form 1-pyrroline-5-carboxylate. The sequence is that of Gamma-glutamyl phosphate reductase from Nitrobacter winogradskyi (strain ATCC 25391 / DSM 10237 / CIP 104748 / NCIMB 11846 / Nb-255).